We begin with the raw amino-acid sequence, 253 residues long: MAIEKKPAGARGSRGSRTVKTLPNGKPDPASLSDRQRRILEVIRDAVVLRGYPPSIREIGDAAGLQSTSSVAYQLKELEKKGFLRRDPNKPRAVDVRHLPETESRSSKAATQAKSKAPQAGAHDPELAGQTSFVPVVGKIAAGSPITAEQNIEEYYPLPAEIVGDGDLFMLQVVGESMRDAGILTGDWVVVRSQPVAEQGEFVAAMIDGEATVKEFHKDSSGIWLLPHNDTFAPIPAENAEIMGKVVSVMRKL.

Residues 1 to 34 (MAIEKKPAGARGSRGSRTVKTLPNGKPDPASLSD) form a disordered region. The segment at residues 56–76 (IREIGDAAGLQSTSSVAYQLK) is a DNA-binding region (H-T-H motif). A compositionally biased stretch (basic and acidic residues) spans 82–106 (GFLRRDPNKPRAVDVRHLPETESRS). The disordered stretch occupies residues 82 to 127 (GFLRRDPNKPRAVDVRHLPETESRSSKAATQAKSKAPQAGAHDPEL). The segment covering 107–120 (SKAATQAKSKAPQA) has biased composition (low complexity). Active-site for autocatalytic cleavage activity residues include Ser-177 and Lys-214.

It belongs to the peptidase S24 family. As to quaternary structure, homodimer.

It catalyses the reaction Hydrolysis of Ala-|-Gly bond in repressor LexA.. Its function is as follows. Represses a number of genes involved in the response to DNA damage (SOS response), including recA and lexA. In the presence of single-stranded DNA, RecA interacts with LexA causing an autocatalytic cleavage which disrupts the DNA-binding part of LexA, leading to derepression of the SOS regulon and eventually DNA repair. The polypeptide is LexA repressor (Corynebacterium glutamicum (strain R)).